Here is a 325-residue protein sequence, read N- to C-terminus: Terpene synthase 11 (325 aa).

Residues 97 to 102 carry the DDxx(x)D/E motif motif; the sequence is DDEYLE. The short motif at 227-235 is the NDxxSxxxD/E motif element; sequence NDIYSFVKE.

This sequence belongs to the terpene synthase family.

It catalyses the reaction (2E,6E)-farnesyl diphosphate = (E)-beta-farnesene + diphosphate. The catalysed reaction is (2E,6E)-farnesyl diphosphate = (3E,6E)-alpha-farnesene + diphosphate. The enzyme catalyses geranylgeranyl diphosphate + H2O = (S)-(+)-nephthenol + diphosphate. Terpene synthase that converts its substrate farnesyl diphosphate (FPP) into the sesquiterpenes (E)-beta-farnesene and (E,E)-alpha-farnesene. TPS11 also converts geranylgeranyl diphosphate (GGPP) into the diterpene (S)-nephthenol. This chain is Terpene synthase 11, found in Dictyostelium purpureum (Slime mold).